Here is a 308-residue protein sequence, read N- to C-terminus: Cis-prenyltransferase 4, chloroplastic (308 aa).

A chloroplast-targeting transit peptide spans 1–45 (MAFSLQLQQIFVSYTRFCSQPKSITNPLISLKLPSIHPLAFAQNA). D84 is an active-site residue.

The protein belongs to the UPP synthase family. Mg(2+) serves as cofactor. As to expression, widely expressed.

It is found in the plastid. It localises to the chloroplast. In terms of biological role, uses neryl diphosphate and geranyl diphosphate to catalyze the cis-prenyl chain elongation and produce polyprenyl diphosphate with a chain of 55 carbons. This is Cis-prenyltransferase 4, chloroplastic from Solanum lycopersicum (Tomato).